The sequence spans 262 residues: uncharacterized protein (262 aa).

Disordered regions lie at residues 1 to 30 and 232 to 262; these read MGKKKFIENEDGTTEVQETESEAPKDKKEK and EEEEVEDEADEETDVKEKVKEEEDEDEDMEE. 3 stretches are compositionally biased toward acidic residues: residues 9 to 21, 232 to 245, and 253 to 262; these read NEDGTTEVQETES, EEEEVEDEADEETD, and EEDEDEDMEE.

This is an uncharacterized protein from Caenorhabditis elegans.